A 191-amino-acid chain; its full sequence is Cell division protein SepF (191 aa).

Residues F153 to P178 show a composition bias toward polar residues. The disordered stretch occupies residues F153–S191.

This sequence belongs to the SepF family. Homodimer. Interacts with FtsZ.

Its subcellular location is the cytoplasm. Cell division protein that is part of the divisome complex and is recruited early to the Z-ring. Probably stimulates Z-ring formation, perhaps through the cross-linking of FtsZ protofilaments. Its function overlaps with FtsA. The protein is Cell division protein SepF of Prochlorococcus marinus (strain MIT 9515).